A 173-amino-acid chain; its full sequence is Photosystem I assembly protein Ycf3 (173 aa).

TPR repeat units lie at residues 35–68 (AYVY…EENS), 72–105 (SETL…NPNQ), and 120–153 (GRIA…NPGG).

This sequence belongs to the Ycf3 family.

It is found in the cellular thylakoid membrane. In terms of biological role, essential for the assembly of the photosystem I (PSI) complex. May act as a chaperone-like factor to guide the assembly of the PSI subunits. The chain is Photosystem I assembly protein Ycf3 from Synechococcus sp. (strain CC9605).